We begin with the raw amino-acid sequence, 377 residues long: Actin-related protein T2 (377 aa).

The protein belongs to the actin family.

It localises to the cytoplasm. The protein localises to the cytoskeleton. This chain is Actin-related protein T2 (Actrt2), found in Mus musculus (Mouse).